Consider the following 293-residue polypeptide: 4-diphosphocytidyl-2-C-methyl-D-erythritol kinase (293 aa).

K16 is a catalytic residue. P99–S109 serves as a coordination point for ATP. Residue D141 is part of the active site.

This sequence belongs to the GHMP kinase family. IspE subfamily.

The catalysed reaction is 4-CDP-2-C-methyl-D-erythritol + ATP = 4-CDP-2-C-methyl-D-erythritol 2-phosphate + ADP + H(+). It functions in the pathway isoprenoid biosynthesis; isopentenyl diphosphate biosynthesis via DXP pathway; isopentenyl diphosphate from 1-deoxy-D-xylulose 5-phosphate: step 3/6. In terms of biological role, catalyzes the phosphorylation of the position 2 hydroxy group of 4-diphosphocytidyl-2C-methyl-D-erythritol. This Burkholderia thailandensis (strain ATCC 700388 / DSM 13276 / CCUG 48851 / CIP 106301 / E264) protein is 4-diphosphocytidyl-2-C-methyl-D-erythritol kinase.